We begin with the raw amino-acid sequence, 289 residues long: MAGAKEIKTKIASVQSTQKITKAMEMVATSKMRKTQDRMAASRPYSETIRNVISHVSKASIGYKHPFLVECEVKKIGILVISTDRGMCGGLNVNLFKTTLNQIKNWKEQNISTDLGLIGSKGISFFRSFGFNIKGQLSGLGDTPALEELIGVANTMFDAYRNGEIDAVYIAYNKFVNTMSQKPVVQQLVPLPESKDDHLNERQQTWDYLYEPEPKALLDSLLVRYLESQIYQAVVDNLASEQAARMVAMKAATDNAGNLINDLRLVYNKARQASITNELNEIVAGAAAI.

Belongs to the ATPase gamma chain family. In terms of assembly, F-type ATPases have 2 components, CF(1) - the catalytic core - and CF(0) - the membrane proton channel. CF(1) has five subunits: alpha(3), beta(3), gamma(1), delta(1), epsilon(1). CF(0) has three main subunits: a, b and c.

It is found in the cell inner membrane. Functionally, produces ATP from ADP in the presence of a proton gradient across the membrane. The gamma chain is believed to be important in regulating ATPase activity and the flow of protons through the CF(0) complex. This chain is ATP synthase gamma chain, found in Haemophilus influenzae (strain 86-028NP).